The sequence spans 158 residues: Cyclic pyranopterin monophosphate synthase (158 aa).

Residues 76-78 (LCH) and 114-115 (ME) each bind substrate. The active site involves Asp129.

The protein belongs to the MoaC family. In terms of assembly, homohexamer; trimer of dimers.

It carries out the reaction (8S)-3',8-cyclo-7,8-dihydroguanosine 5'-triphosphate = cyclic pyranopterin phosphate + diphosphate. Its pathway is cofactor biosynthesis; molybdopterin biosynthesis. Catalyzes the conversion of (8S)-3',8-cyclo-7,8-dihydroguanosine 5'-triphosphate to cyclic pyranopterin monophosphate (cPMP). This chain is Cyclic pyranopterin monophosphate synthase, found in Shewanella halifaxensis (strain HAW-EB4).